The sequence spans 294 residues: Homeobox protein HD1 (294 aa).

The 21-residue stretch at glutamate 197 to isoleucine 217 folds into the ELK domain. Positions methionine 218–asparagine 281 form a DNA-binding region, homeobox; TALE-type.

Belongs to the TALE/KNOX homeobox family. In terms of tissue distribution, in roots, stems and cotyledons of one-week old seedlings. In mature plants, in young leaves from first level below flowers as well as in flower buds and open flowers.

Its subcellular location is the nucleus. Functionally, possible developmental regulator. This is Homeobox protein HD1 (HD1) from Brassica napus (Rape).